A 160-amino-acid chain; its full sequence is Competence protein ComGD (160 aa).

The helical transmembrane segment at 30-50 (AFTMLESLLVLGLVSILALGL) threads the bilayer.

As to quaternary structure, the transformation pili are flexible filaments, consisting mainly of the major pilin ComGC and smaller amounts of the minor pilins, including at least ComGD, ComGF and ComGG, and perhaps ComGE. Interacts with ComGE. Interacts with ComGF. Interacts with ComGG.

The protein resides in the cell membrane. It localises to the cell surface. Its subcellular location is the fimbrium. In terms of biological role, required for formation of the type IV-like pilus (T4P) that plays a role in transformation. Transformation pili are dynamically extended and retracted, perhaps thereby promoting DNA uptake and transformation. Involved in transformation. Required for DNA binding. The sequence is that of Competence protein ComGD from Streptococcus pneumoniae (strain ATCC BAA-255 / R6).